A 292-amino-acid chain; its full sequence is Retinal homeobox protein Rx3 (292 aa).

The disordered stretch occupies residues 1-27 (MRLVGSQYKDMEDRLSPSARLVRSPGS). The Octapeptide motif motif lies at 32 to 39 (HSIESILG). Disordered stretches follow at residues 53 to 72 (GSGKTGKDTEHLSPKKDSNK) and 85 to 107 (SPDLPDADGGKLSDDENPKKKHR). Basic and acidic residues-rich tracts occupy residues 57–72 (TGKDTEHLSPKKDSNK) and 92–102 (DGGKLSDDENP). A DNA-binding region (homeobox) is located at residues 106–165 (HRRNRTTFTTFQLHELERAFEKSHYPDVYSREELALKVNLPEVRVQVWFQNRRAKWRRQE). The OAR motif lies at 272–285 (TSIASLRMKAKEHI). Positions 278 to 282 (RMKAK) match the Nuclear localization signal motif.

This sequence belongs to the paired homeobox family. Bicoid subfamily.

Its subcellular location is the nucleus. Its function is as follows. Plays a critical role in eye formation by regulating the initial specification of retinal cells and/or their subsequent proliferation. This Danio rerio (Zebrafish) protein is Retinal homeobox protein Rx3 (rx3).